Consider the following 977-residue polypeptide: Glutamate receptor 2 (977 aa).

The first 19 residues, 1 to 19 (MNKNLLVFGFLIFVKIGET), serve as a signal peptide directing secretion. Topologically, residues 20–621 (SKKFPLRAFV…FSFMEPLGMT (602 aa)) are extracellular. 6 N-linked (GlcNAc...) asparagine glycosylation sites follow: Asn-36, Asn-227, Asn-291, Asn-427, Asn-532, and Asn-566. The chain crosses the membrane as a helical span at residues 622–642 (IWIFTLSSYFGVSLTIFLVSW). The Cytoplasmic segment spans residues 643–695 (FSPYEKRIEFKRGEFTVTNEFTLYNSLWFTLAAFMQQGTDILPRAVSGRIASS). Residues 696-716 (CWWFFTLIIVSSYTANLAAFL) form a helical membrane-spanning segment. Residues 717 to 898 (TLERMTPPIE…GTSSSLNLSK (182 aa)) are Extracellular-facing. N-linked (GlcNAc...) asparagine glycans are attached at residues Asn-783 and Asn-895. The chain crosses the membrane as a helical span at residues 899 to 919 (VAGIFYILLAGMVLSMCTALV). The Cytoplasmic segment spans residues 920 to 977 (EFLFRKNKENREKERNRMRSSRPLKPGILASCERAKQKQLQNRRTKSEEVSTPRSTLF). The segment at 954–977 (AKQKQLQNRRTKSEEVSTPRSTLF) is disordered.

The protein belongs to the glutamate-gated ion channel (TC 1.A.10.1) family. In terms of tissue distribution, command interneurons of the locomotory control circuit (AIA, AIB, AVA, AVD, AVE, PVC, RIA, RIG and RIR) and motor neurons (AVG, M1, RMDD and RMDV).

It localises to the membrane. The protein resides in the postsynaptic cell membrane. L-glutamate acts as an excitatory neurotransmitter at many synapses in the central nervous system. The postsynaptic actions of glutamate are mediated by a variety of receptors that are named according to their selective agonists. Required for response to mechanical and osmotic stimuli. The polypeptide is Glutamate receptor 2 (glr-2) (Caenorhabditis elegans).